Consider the following 223-residue polypeptide: Deoxyribose-phosphate aldolase (223 aa).

Asp89 serves as the catalytic Proton donor/acceptor. Residue Lys152 is the Schiff-base intermediate with acetaldehyde of the active site. The active-site Proton donor/acceptor is Lys181.

It belongs to the DeoC/FbaB aldolase family. DeoC type 1 subfamily.

It is found in the cytoplasm. The enzyme catalyses 2-deoxy-D-ribose 5-phosphate = D-glyceraldehyde 3-phosphate + acetaldehyde. The protein operates within carbohydrate degradation; 2-deoxy-D-ribose 1-phosphate degradation; D-glyceraldehyde 3-phosphate and acetaldehyde from 2-deoxy-alpha-D-ribose 1-phosphate: step 2/2. Functionally, catalyzes a reversible aldol reaction between acetaldehyde and D-glyceraldehyde 3-phosphate to generate 2-deoxy-D-ribose 5-phosphate. This Listeria monocytogenes serotype 4b (strain F2365) protein is Deoxyribose-phosphate aldolase.